A 311-amino-acid chain; its full sequence is MFHHISVMLNETIDYLNVKENGVYIDCTLGGAGHALYLLNQLNDDGRLIAIDQDQTAIDNAKKVLKEHLHKVTFVHSNFRELTQILKDLNIEKVDGIYYDLGVSSPQLDIPERGFSYHHDATLDMRMDQTQELTAYEIVNNWSYEALVKIFYRYGEEKFSKQIARRIEAHREQQPITTTLELVDIIKEGIPAKARRKGGHPAKRVFQALRIAVNDELSAFEDSIEQAIELVKVDGRISVITFHSLEDRLCKQVFQEYEKGPEVPRGLPVIPEAYTPKLKRINRKPITATEEDLDDNNRARSAKLRVAEILK.

S-adenosyl-L-methionine is bound by residues 32–34, Asp52, Phe79, Asp100, and Gln107; that span reads AGH.

Belongs to the methyltransferase superfamily. RsmH family.

It is found in the cytoplasm. The catalysed reaction is cytidine(1402) in 16S rRNA + S-adenosyl-L-methionine = N(4)-methylcytidine(1402) in 16S rRNA + S-adenosyl-L-homocysteine + H(+). Its function is as follows. Specifically methylates the N4 position of cytidine in position 1402 (C1402) of 16S rRNA. This chain is Ribosomal RNA small subunit methyltransferase H, found in Staphylococcus aureus (strain bovine RF122 / ET3-1).